The primary structure comprises 318 residues: uncharacterized protein (318 aa).

This is an uncharacterized protein from Escherichia coli (strain K12).